The primary structure comprises 193 residues: Large ribosomal subunit protein bL25 (193 aa).

Belongs to the bacterial ribosomal protein bL25 family. CTC subfamily. Part of the 50S ribosomal subunit; part of the 5S rRNA/L5/L18/L25 subcomplex. Contacts the 5S rRNA. Binds to the 5S rRNA independently of L5 and L18.

Its function is as follows. This is one of the proteins that binds to the 5S RNA in the ribosome where it forms part of the central protuberance. The protein is Large ribosomal subunit protein bL25 of Clostridium tetani (strain Massachusetts / E88).